A 70-amino-acid chain; its full sequence is Putative antitoxin VapB34 (70 aa).

In terms of biological role, antitoxin component of a possible type II toxin-antitoxin (TA) system. The cognate toxin is VapC34. In Mycobacterium tuberculosis (strain CDC 1551 / Oshkosh), this protein is Putative antitoxin VapB34 (vapB34).